A 557-amino-acid polypeptide reads, in one-letter code: MEPKENGSELGQKIIDGPTNPMVTPLLNDLYQFTMAYAYWKAGKHNERSVFDLYFRKNPFGGEYTVFAGLEECVKFLANFKLTDEEIDFVQECLPGSEEAFCDYLRGLDCSDVEVYAIPEGSVVFPKVPLMRVEGPVGVVQLLETPFLNLVNFASLVATNAARHRFVAGKSKSLLEFGARRAQGPDGAISASKYCYLGGFDATSNVAAGKLFGIPLRGTHSHAYVSSFMSTDEIVDKVLRSADGKTTCEDFVSHVQTWLKKIQYSPSLSGIFSETNQSELAAFTSYALAFPKTFLALVDTYDVMKSGIPNFCAVALALNDFGYKALGIRLDSGDLAYLSREARNFFCTVERELKVPGFGKMVVTASNDLNEETIDALNKQGHEVDAFGIGTYLVTCYSQAALGCVFKLVEINNQPRIKLSEDVTKVSIPCKKRSYRLYGKEGYPLVDIMTGENEPPPKVGERLLCRHPFNESKRAYVVPQRVEELLKCYWRGSADEAREVLPPLKEIRDRCIKQLENMRPDHMRRLNPTPYKVSVSAKLYDFIHFLWLNEAPVGELQ.

Nicotinate-binding residues include Y31 and T219. At H222 the chain carries Phosphohistidine. R329 is a nicotinate binding site. T391 contributes to the 5-phospho-alpha-D-ribose 1-diphosphate binding site.

Belongs to the NAPRTase family. Mg(2+) is required as a cofactor. The cofactor is Mn(2+). Post-translationally, transiently phosphorylated on a His residue during the reaction cycle. Phosphorylation strongly increases the affinity for substrates and increases the rate of nicotinate D-ribonucleotide production. Dephosphorylation regenerates the low-affinity form of the enzyme, leading to product release.

It carries out the reaction nicotinate + 5-phospho-alpha-D-ribose 1-diphosphate + ATP + H2O = nicotinate beta-D-ribonucleotide + ADP + phosphate + diphosphate. It participates in cofactor biosynthesis; NAD(+) biosynthesis; nicotinate D-ribonucleotide from nicotinate: step 1/1. Catalyzes the first step in the biosynthesis of NAD from nicotinic acid, the ATP-dependent synthesis of beta-nicotinate D-ribonucleotide from nicotinate and 5-phospho-D-ribose 1-phosphate. Helps prevent cellular oxidative stress via its role in NAD biosynthesis. The chain is Nicotinate phosphoribosyltransferase 2 from Arabidopsis thaliana (Mouse-ear cress).